The chain runs to 609 residues: Protein KINESIN LIGHT CHAIN-RELATED 1 (609 aa).

The interval methionine 1 to proline 77 is disordered. The segment covering lysine 38–serine 55 has biased composition (low complexity). 10 TPR repeats span residues alanine 140 to threonine 173, phenylalanine 183 to threonine 216, glycine 225 to histidine 258, alanine 267 to glycine 301, alanine 307 to serine 340, alanine 349 to proline 382, alanine 392 to lysine 425, alanine 433 to alanine 466, glycine 474 to glutamate 507, and leucine 516 to lysine 549. Residues leucine 582–phenylalanine 609 form a disordered region.

Belongs to the kinesin light chain family. Interacts with IQD1.

The protein resides in the cytoplasm. The protein localises to the cytoskeleton. This is Protein KINESIN LIGHT CHAIN-RELATED 1 from Arabidopsis thaliana (Mouse-ear cress).